The primary structure comprises 198 residues: tRNA (pseudouridine(54)-N(1))-methyltransferase (198 aa).

Residues L134 and G155 each coordinate S-adenosyl-L-methionine.

It belongs to the methyltransferase superfamily. TrmY family. In terms of assembly, homodimer.

The protein resides in the cytoplasm. The enzyme catalyses pseudouridine(54) in tRNA + S-adenosyl-L-methionine = N(1)-methylpseudouridine(54) in tRNA + S-adenosyl-L-homocysteine + H(+). Its function is as follows. Specifically catalyzes the N1-methylation of pseudouridine at position 54 (Psi54) in tRNAs. This chain is tRNA (pseudouridine(54)-N(1))-methyltransferase, found in Thermococcus kodakarensis (strain ATCC BAA-918 / JCM 12380 / KOD1) (Pyrococcus kodakaraensis (strain KOD1)).